Consider the following 469-residue polypeptide: Gustatory receptor for sugar taste 64f (469 aa).

Residues 1–117 (MKILPKLERK…SFSWRNIRTC (117 aa)) are Cytoplasmic-facing. Residues 118–138 (FSLLFIASSLANFGLSLFKVL) traverse the membrane as a helical segment. The Extracellular portion of the chain corresponds to 139–146 (NNPISFNS). A helical transmembrane segment spans residues 147-167 (IKPIIFRGSVLLVLIVALNLA). Residues 168–199 (RQWPQLMMYWHTVEKDLPQYKTQLTKWKMGHT) lie on the Cytoplasmic side of the membrane. A helical membrane pass occupies residues 200 to 220 (ISMVMLLGMMLSFAEHILSMV). Topologically, residues 221–265 (SAINYASFCNRTADPIQNYFLRTNDEIFFVTSYSTTLALWGKFQN) are extracellular. Asparagine 230 carries an N-linked (GlcNAc...) asparagine glycan. A helical transmembrane segment spans residues 266 to 286 (VFSTFIWNYMDLFVMIVSIGL). At 287–330 (ASKFRQLNDDLRNFKGMNMAPSYWSERRIQYRNICILCDKMDDA) the chain is on the cytoplasmic side. The helical transmembrane segment at 331 to 351 (ISLITMVSFSNNLYFICVQLL) threads the bilayer. Residues 352–353 (RS) are Extracellular-facing. A helical transmembrane segment spans residues 354–374 (LNTMPSVAHAVYFYFSLIFLI). The Cytoplasmic segment spans residues 375-435 (GRTLAVSLYS…GMKFFHLTRK (61 aa)). Residues 436 to 456 (LVLSVAGTIVTYELVLIQFHE) form a helical membrane-spanning segment. Residues 457 to 469 (DNDLWDCDQSYYS) are Extracellular-facing.

The protein belongs to the insect chemoreceptor superfamily. Gustatory receptor (GR) family. Gr5a subfamily. In terms of tissue distribution, expressed in Gr5a-expressing sugar-sensing cells.

The protein resides in the cell membrane. Its function is as follows. One of the few identified sugar gustatory receptors identified so far and which promotes the starvation-induced increase of feeding motivation. Required in combination with Gr64a to detect sucrose, maltose, and glucose. This chain is Gustatory receptor for sugar taste 64f (Gr64f), found in Drosophila melanogaster (Fruit fly).